Here is a 371-residue protein sequence, read N- to C-terminus: Putative glutamate--cysteine ligase 2 (371 aa).

It belongs to the glutamate--cysteine ligase type 2 family. YbdK subfamily.

It carries out the reaction L-cysteine + L-glutamate + ATP = gamma-L-glutamyl-L-cysteine + ADP + phosphate + H(+). Its function is as follows. ATP-dependent carboxylate-amine ligase which exhibits weak glutamate--cysteine ligase activity. In Cupriavidus necator (strain ATCC 17699 / DSM 428 / KCTC 22496 / NCIMB 10442 / H16 / Stanier 337) (Ralstonia eutropha), this protein is Putative glutamate--cysteine ligase 2.